A 436-amino-acid chain; its full sequence is 3-ketoacyl-CoA thiolase (436 aa).

The Acyl-thioester intermediate role is filled by C99. Catalysis depends on proton acceptor residues H392 and C422.

It belongs to the thiolase-like superfamily. Thiolase family. In terms of assembly, heterotetramer of two alpha chains (FadJ) and two beta chains (FadI).

It is found in the cytoplasm. It catalyses the reaction an acyl-CoA + acetyl-CoA = a 3-oxoacyl-CoA + CoA. The protein operates within lipid metabolism; fatty acid beta-oxidation. Its function is as follows. Catalyzes the final step of fatty acid oxidation in which acetyl-CoA is released and the CoA ester of a fatty acid two carbons shorter is formed. In Salmonella heidelberg (strain SL476), this protein is 3-ketoacyl-CoA thiolase.